Reading from the N-terminus, the 280-residue chain is 2-dehydro-3-deoxyphosphooctonate aldolase (280 aa).

The protein belongs to the KdsA family.

The protein localises to the cytoplasm. The catalysed reaction is D-arabinose 5-phosphate + phosphoenolpyruvate + H2O = 3-deoxy-alpha-D-manno-2-octulosonate-8-phosphate + phosphate. It participates in carbohydrate biosynthesis; 3-deoxy-D-manno-octulosonate biosynthesis; 3-deoxy-D-manno-octulosonate from D-ribulose 5-phosphate: step 2/3. Its pathway is bacterial outer membrane biogenesis; lipopolysaccharide biosynthesis. In Rhizobium meliloti (strain 1021) (Ensifer meliloti), this protein is 2-dehydro-3-deoxyphosphooctonate aldolase.